A 302-amino-acid polypeptide reads, in one-letter code: Syntaxin-17 (302 aa).

Ser-2 carries the N-acetylserine modification. At 2–228 the chain is on the cytoplasmic side; the sequence is SEDEEKVKLR…KNLGKAAKYK (227 aa). N6-acetyllysine is present on Lys-41. Positions 53 to 123 form a coiled coil; it reads EEHINAGRTV…EELKKQFNDE (71 aa). Phosphotyrosine; by ABL1 is present on Tyr-157. The region spanning 162 to 224 is the t-SNARE coiled-coil homology domain; it reads IPRDQNAAES…EEGTKNLGKA (63 aa). Residues 229-249 form a helical membrane-spanning segment; it reads LAALPVAGALIGGVVGGPIGL. The interval 229–275 is necessary and sufficient for localization to autophagosome; sequence LAALPVAGALIGGVVGGPIGLLAGFKVAGIAAALGGGVLGFTGGKLI. Over 250-254 the chain is Lumenal; it reads LAGFK. The helical transmembrane segment at 255-275 threads the bilayer; that stretch reads VAGIAAALGGGVLGFTGGKLI. Over 276-302 the chain is Cytoplasmic; that stretch reads QRRKQKMMEKLASSCPDLPSQTDKKCS. Residue Ser-289 is modified to Phosphoserine. An Endoplasmic reticulum retention signal motif is present at residues 299-302; that stretch reads KKCS.

It belongs to the syntaxin family. Forms a SNARE complex composed of VAMP8, SNAP29 and STX17 involved in fusion of autophagosome with lysosome. May interact with VTI1B. Probably interacts with BET1, SCFD1 and SEC22B. Interacts with PTPN2 and ABL1; involved in STX17 phosphorylation. Interacts with COPB1. Interacts with TMED9 and TMED10; the interaction is direct. Interacts with VAMP7. Interacts with RUBCNL/PACER; promoting targeting of RUBCNL/PACER to autophagosome. Interacts with VAMP8, SNAP29, VPS39 and VPS41; these interactions are increased in the absence of TMEM39A. Interacts with IRGM; promoting STX17 recruitment to autophagosomes. Interacts with ATG8 proteins GABARAP and MAP1LC3B. Interacts with RNF115; this interaction enhances STX17 stability which in turn promotes autophagosome maturation. Interacts with RAB39A (GTP-bound); the interaction promotes autophagosome-lysosome membrane fusion driven by STX17-SNAP29-VAMP8. Interacts with RAB39B; the interaction may promote a different fonction in autophagy as compared with RAB39A. Phosphorylated at Tyr-157 probably by ABL1. Dephosphorylation by PTPN2; regulates exit from the endoplasmic reticulum.

The protein resides in the endoplasmic reticulum membrane. The protein localises to the smooth endoplasmic reticulum membrane. It is found in the endoplasmic reticulum-Golgi intermediate compartment membrane. Its subcellular location is the cytoplasmic vesicle. It localises to the autophagosome membrane. The protein resides in the COPII-coated vesicle membrane. The protein localises to the cytoplasm. It is found in the cytosol. Its subcellular location is the mitochondrion membrane. It localises to the autolysosome membrane. In terms of biological role, SNAREs, soluble N-ethylmaleimide-sensitive factor-attachment protein receptors, are essential proteins for fusion of cellular membranes. SNAREs localized on opposing membranes assemble to form a trans-SNARE complex, an extended, parallel four alpha-helical bundle that drives membrane fusion. STX17 is a SNARE of the autophagosome involved in autophagy through the direct control of autophagosome membrane fusion with the lysosome membrane. May also play a role in the early secretory pathway where it may maintain the architecture of the endoplasmic reticulum-Golgi intermediate compartment/ERGIC and Golgi and/or regulate transport between the endoplasmic reticulum, the ERGIC and the Golgi. The protein is Syntaxin-17 of Bos taurus (Bovine).